Reading from the N-terminus, the 165-residue chain is Polcalcin Jun o 2 (165 aa).

EF-hand domains follow at residues 22-57 (QSVH…LGSD), 58-86 (VGEA…FVDL), 91-126 (ASVK…VGEP), and 127-162 (CTIE…EMTD). Aspartate 35, asparagine 37, aspartate 39, lysine 41, glutamate 46, aspartate 71, aspartate 73, aspartate 75, tyrosine 77, glutamate 82, aspartate 104, aspartate 106, asparagine 108, serine 110, glutamate 115, aspartate 140, asparagine 142, aspartate 144, and glutamate 151 together coordinate Ca(2+).

In Juniperus oxycedrus (Prickly juniper), this protein is Polcalcin Jun o 2.